Here is a 201-residue protein sequence, read N- to C-terminus: Glycerol-3-phosphate acyltransferase (201 aa).

Helical transmembrane passes span L3–L23, W53–G73, H80–F100, I115–F135, and F153–Y175.

The protein belongs to the PlsY family. Probably interacts with PlsX.

It is found in the cell inner membrane. It carries out the reaction an acyl phosphate + sn-glycerol 3-phosphate = a 1-acyl-sn-glycero-3-phosphate + phosphate. It functions in the pathway lipid metabolism; phospholipid metabolism. In terms of biological role, catalyzes the transfer of an acyl group from acyl-phosphate (acyl-PO(4)) to glycerol-3-phosphate (G3P) to form lysophosphatidic acid (LPA). This enzyme utilizes acyl-phosphate as fatty acyl donor, but not acyl-CoA or acyl-ACP. The protein is Glycerol-3-phosphate acyltransferase of Pasteurella multocida (strain Pm70).